A 274-amino-acid chain; its full sequence is MRFTKMNGLGNDFVIIDAVTQNIHLTSENIRYLSDRFYGVGFDQLLIVEPPYDPAIDFHCRIYNSDGTEVNQCGNGMRCVAQFVCLKKLTNKRNIHISTRANHIILSIMNDNRVSVNMGAPIFDPKLIPFYISQYQKTYILFLPTQIILCGVVSMGNPHCIILVEKIENIQVTSLGSALEDHHCFPERVNVSFMQIINCNNIRLRVYERGVGETQACGTAACAAVAVGIQQGLLYESVNVNLPGGTISVNWKGASNALYMTGSTSYVYDGYINL.

Asn11, Gln44, and Asn64 together coordinate substrate. Residue Cys73 is the Proton donor of the active site. Substrate contacts are provided by residues Gly74–Asn75, Asn157, Asn190, and Glu208–Arg209. Cys217 (proton acceptor) is an active-site residue. Substrate is bound at residue Gly218–Thr219.

The protein belongs to the diaminopimelate epimerase family. As to quaternary structure, homodimer.

Its subcellular location is the cytoplasm. The enzyme catalyses (2S,6S)-2,6-diaminopimelate = meso-2,6-diaminopimelate. The protein operates within amino-acid biosynthesis; L-lysine biosynthesis via DAP pathway; DL-2,6-diaminopimelate from LL-2,6-diaminopimelate: step 1/1. Its function is as follows. Catalyzes the stereoinversion of LL-2,6-diaminopimelate (L,L-DAP) to meso-diaminopimelate (meso-DAP), a precursor of L-lysine and an essential component of the bacterial peptidoglycan. This chain is Diaminopimelate epimerase, found in Blochmanniella pennsylvanica (strain BPEN).